Reading from the N-terminus, the 334-residue chain is Phenylalanine--tRNA ligase alpha subunit (334 aa).

Position 249 (glutamate 249) interacts with Mg(2+).

Belongs to the class-II aminoacyl-tRNA synthetase family. Phe-tRNA synthetase alpha subunit type 1 subfamily. As to quaternary structure, tetramer of two alpha and two beta subunits. Mg(2+) is required as a cofactor.

The protein resides in the cytoplasm. It carries out the reaction tRNA(Phe) + L-phenylalanine + ATP = L-phenylalanyl-tRNA(Phe) + AMP + diphosphate + H(+). This chain is Phenylalanine--tRNA ligase alpha subunit, found in Desulfatibacillum aliphaticivorans.